The following is a 613-amino-acid chain: Apoptosis-inducing factor 1, mitochondrial (613 aa).

2 short sequence motifs (mitochondrial localization signal) span residues 1 to 31 and 63 to 89; these read MFRCGGLAAGALKQKLVPLVRTVCVRSPRQR and KIDNSVLVLIVGLSTVGAGAYAYKTMK. The transit peptide at 1–54 directs the protein to the mitochondrion; it reads MFRCGGLAAGALKQKLVPLVRTVCVRSPRQRNRLPGNLFQRWHVPLELQMTRQM. Positions 55–101 are cleaved as a propeptide — removed in mature form; sequence ASSGASGGKIDNSVLVLIVGLSTVGAGAYAYKTMKEDEKRYNERISG. The interval 100–127 is disordered; it reads SGLGLTPEQKQKKAALSASEGEEVPQDK. The residue at position 105 (Thr105) is a Phosphothreonine. Lys109 carries the post-translational modification N6-succinyllysine. Residues Ser116 and Ser118 each carry the phosphoserine modification. Residues 134–483 are FAD-dependent oxidoreductase; that stretch reads FLLIGGGTAA…KPYWHQSMFW (350 aa). Residues 138–142, 164–165, Arg172, and Lys177 each bind FAD; these read GGGTA and ED. Trp196 serves as a coordination point for NAD(+). An FAD-binding site is contributed by Val233. A Glycyl lysine isopeptide (Lys-Gly) (interchain with G-Cter in ubiquitin) cross-link involves residue Lys255. Ser268 carries the post-translational modification Phosphoserine. Arg285 provides a ligand contact to FAD. Phosphoserine is present on Ser292. NAD(+) is bound by residues 308 to 311, Glu336, and Lys342; that span reads GGFL. Position 371 is a phosphoserine (Ser371). The residue at position 388 (Lys388) is an N6-acetyllysine. Gly399 provides a ligand contact to NAD(+). Asp438 lines the FAD pocket. The Nuclear localization signal motif lies at 446–451; sequence KLGRRR. NAD(+)-binding positions include 453-454, Trp483, and Glu493; that span reads EH. FAD is bound by residues 454 to 455 and Trp483; that span reads HH. Positions 513 to 529 are enriched in polar residues; the sequence is AQDNPKSATEQSGTGIR. A disordered region spans residues 513-554; that stretch reads AQDNPKSATEQSGTGIRSESETESEASEITIPPSTPAVPQAP. At Thr521 the chain carries Phosphothreonine. Residues Ser524 and Ser530 each carry the phosphoserine modification. Residue Asn583 coordinates NAD(+). Lys593 is subject to N6-acetyllysine.

Belongs to the FAD-dependent oxidoreductase family. Monomer (oxidized form). Homodimer (reduced form). Upon reduction with NADH, undergoes dimerization and forms tight, long-lived FADH2-NAD charge transfer complexes (CTC) resistant to oxidation. Also dimerizes with isoform 3 preventing its release from mitochondria. Interacts with XIAP/BIRC4. Interacts (via N-terminus) with EIF3G (via C-terminus). Interacts with PRELID1. Interacts with CHCHD4; the interaction increases in presence of NADH. Interacts with processed form of PARP1 (Poly [ADP-ribose] polymerase 1, processed C-terminus); interaction is mediated with poly-ADP-ribose chains attached to PARP1, promoting translocation into the nucleus. FAD serves as cofactor. In terms of processing, under normal conditions, a 54-residue N-terminal segment is first proteolytically removed during or just after translocation into the mitochondrial intermembrane space (IMS) by the mitochondrial processing peptidase (MPP) to form the inner-membrane-anchored mature form (AIFmit). During apoptosis, it is further proteolytically processed at amino-acid position 101 leading to the generation of the mature form, which is confined to the mitochondrial IMS in a soluble form (AIFsol). AIFsol is released to the cytoplasm in response to specific death signals, and translocated to the nucleus, where it induces nuclear apoptosis in a caspase-independent manner. Post-translationally, ubiquitination by XIAP/BIRC4 does not lead to proteasomal degradation. Ubiquitination at Lys-255 by XIAP/BIRC4 blocks its ability to bind DNA and induce chromatin degradation, thereby inhibiting its ability to induce cell death. In terms of tissue distribution, expressed in all tested tissues. Detected in muscle and skin fibroblasts (at protein level). Expressed in osteoblasts (at protein level). Brain specific. As to expression, expressed in all tested tissues except brain. In terms of tissue distribution, isoform 5 is frequently down-regulated in human cancers.

Its subcellular location is the mitochondrion intermembrane space. It is found in the mitochondrion inner membrane. The protein localises to the cytoplasm. The protein resides in the nucleus. It localises to the perinuclear region. Its subcellular location is the mitochondrion. It is found in the cytosol. The catalysed reaction is A + NADH + H(+) = AH2 + NAD(+). Functions both as NADH oxidoreductase and as regulator of apoptosis. In response to apoptotic stimuli, it is released from the mitochondrion intermembrane space into the cytosol and to the nucleus, where it functions as a proapoptotic factor in a caspase-independent pathway. Release into the cytoplasm is mediated upon binding to poly-ADP-ribose chains. The soluble form (AIFsol) found in the nucleus induces 'parthanatos' i.e. caspase-independent fragmentation of chromosomal DNA. Binds to DNA in a sequence-independent manner. Interacts with EIF3G, and thereby inhibits the EIF3 machinery and protein synthesis, and activates caspase-7 to amplify apoptosis. Plays a critical role in caspase-independent, pyknotic cell death in hydrogen peroxide-exposed cells. In contrast, participates in normal mitochondrial metabolism. Plays an important role in the regulation of respiratory chain biogenesis by interacting with CHCHD4 and controlling CHCHD4 mitochondrial import. Its function is as follows. Has NADH oxidoreductase activity. Does not induce nuclear apoptosis. In terms of biological role, pro-apoptotic isoform. The sequence is that of Apoptosis-inducing factor 1, mitochondrial from Homo sapiens (Human).